Reading from the N-terminus, the 1123-residue chain is Eukaryotic translation initiation factor 2-alpha kinase PK4 (1123 aa).

Positions 1-30 (MKKRIRSSYKVGSSNKYHKKNYTDNEKDKK) are disordered. The span at 21–30 (NYTDNEKDKK) shows a compositional bias: basic and acidic residues. ATP contacts are provided by residues 245–253 (IGQGGFGSV) and K270. Disordered regions lie at residues 409 to 493 (FYSD…NDEG), 572 to 609 (RNED…NELD), and 742 to 800 (ENDD…DDDI). Over residues 419–428 (KNKENPEKNH) the composition is skewed to basic and acidic residues. Basic residues predominate over residues 455 to 477 (HKLKKRKNKKKKSKKKRKSKSKI). 5 tandem repeats follow at residues 576–582 (DKNGLDG), 583–589 (DKNGLDG), 590–596 (DKNGLDG), 597–603 (DKNGLDG), and 604–610 (DKNELDD). A 5 X 7 AA tandem repeat of D-K-N-[GE]-L-D-[GD] region spans residues 576-610 (DKNGLDGDKNGLDGDKNGLDGDKNGLDGDKNELDD). A Protein kinase domain is found at 678–1049 (TNVESINTNG…KIKVLLDPHL (372 aa)). Positions 743–754 (NDDDDDDDDDDN) are enriched in acidic residues. D886 serves as the catalytic Proton acceptor. Phosphothreonine is present on T953.

This sequence belongs to the protein kinase superfamily. Ser/Thr protein kinase family. GCN2 subfamily. May form oligomers in response to stress; oligomerization may result in catalytic activity. Interacts with BIP; the interaction is disrupted in response to stress. In terms of processing, auto-phosphorylated.

Its subcellular location is the endoplasmic reticulum membrane. It catalyses the reaction L-seryl-[protein] + ATP = O-phospho-L-seryl-[protein] + ADP + H(+). It carries out the reaction L-threonyl-[protein] + ATP = O-phospho-L-threonyl-[protein] + ADP + H(+). With respect to regulation, dissociation from BIP and oligomerization, may results autophosphorylation and kinase activity induction. In terms of biological role, during the asexual blood stage, phosphorylates translation factor eIF2alpha in late schizonts resulting in protein translation inhibition. Plays a role in trophozoite differentiation into schizonts. This chain is Eukaryotic translation initiation factor 2-alpha kinase PK4, found in Plasmodium falciparum.